Here is a 283-residue protein sequence, read N- to C-terminus: Release factor glutamine methyltransferase (283 aa).

Residues 121-125 (GTGSG), aspartate 144, and asparagine 188 contribute to the S-adenosyl-L-methionine site. Substrate is bound at residue 188 to 191 (NPPY).

This sequence belongs to the protein N5-glutamine methyltransferase family. PrmC subfamily.

The enzyme catalyses L-glutaminyl-[peptide chain release factor] + S-adenosyl-L-methionine = N(5)-methyl-L-glutaminyl-[peptide chain release factor] + S-adenosyl-L-homocysteine + H(+). In terms of biological role, methylates the class 1 translation termination release factors RF1/PrfA and RF2/PrfB on the glutamine residue of the universally conserved GGQ motif. The sequence is that of Release factor glutamine methyltransferase from Bacillus cereus (strain ATCC 14579 / DSM 31 / CCUG 7414 / JCM 2152 / NBRC 15305 / NCIMB 9373 / NCTC 2599 / NRRL B-3711).